Reading from the N-terminus, the 612-residue chain is MCGIVGAIRAHHNVVDFLTDGLKRLEYRGYDSSGIAVNTDGKIKRVRRVGRVQLMEDAAREKGISGGIGIGHTRWATHGGVTEPNAHPHISGGMIAVVHNGIIENFESERKRLEGLGYRFESQTDTEVIAHSINHEYAQNGGRLFEAVQEAVKRFHGAYAIAVIAQDKPDELVVARMGCPLLVALGDDETFIASDVSAVIAFTRRVAYLEDGDIALLASDGIKRLTDKNGLPAERKVKVSELSLASLELGLYSHFMQKEIHEQPRAIADTAEVFLDGGFIPENFGKDAKSVFESIRSVKILACGTSYYAALTAKYWLESIAKIPSDVEIASEYRYRSVIADSDQLVITISQSGETLDTMEALKYAKSLGHRHSLSICNVMESALPRESSLVLYTRAGAEIGVASTKAFTTQLVALFGLAVTLAKVRGLVSEEDEARYTEELRQLPGSVQHALNLEPQIAAWAQQFAKKTSALFLGRGIHYPIALEGALKLKEITYIHAEAYPAGELKHGPLALVDENMPVVVIAPNDSLLDKVKANMQEVGARGGELFVFADLDSNFNATEGVHVIRAPRHVGKLSPVVHTIPVQLLAYHTALARGTDVDKPRNLAKSVTVE.

Cysteine 2 functions as the Nucleophile; for GATase activity in the catalytic mechanism. Residues 2-220 form the Glutamine amidotransferase type-2 domain; sequence CGIVGAIRAH…DGDIALLASD (219 aa). 2 consecutive SIS domains span residues 288-428 and 461-602; these read AKSV…VRGL and WAQQ…VDKP. Lysine 607 serves as the catalytic For Fru-6P isomerization activity.

Homodimer.

The protein resides in the cytoplasm. The catalysed reaction is D-fructose 6-phosphate + L-glutamine = D-glucosamine 6-phosphate + L-glutamate. Functionally, catalyzes the first step in hexosamine metabolism, converting fructose-6P into glucosamine-6P using glutamine as a nitrogen source. This Neisseria meningitidis serogroup B (strain ATCC BAA-335 / MC58) protein is Glutamine--fructose-6-phosphate aminotransferase [isomerizing].